The sequence spans 184 residues: Casparian strip membrane protein 3 (184 aa).

The Cytoplasmic portion of the chain corresponds to 1 to 22; the sequence is MEGSGEHGETSKGPLSKGVSRG. The chain crosses the membrane as a helical span at residues 23–43; it reads LCILDLIFRVIAVIGTLASAI. Topologically, residues 44–72 are extracellular; the sequence is AMGTTNQTMPFFTQFVQFKERYSDLPTLT. Residue Asn49 is glycosylated (N-linked (GlcNAc...) asparagine). The helical transmembrane segment at 73–93 threads the bilayer; sequence FFVVANSIASAYLIISLPLSI. Topologically, residues 94 to 105 are cytoplasmic; that stretch reads VHIIRSRAKYSR. Residues 106 to 126 form a helical membrane-spanning segment; sequence LILIFFDVAMLALVTAAASAG. At 127–159 the chain is on the extracellular side; it reads AAIVYLAHNGNVSANWFAICQQFDSFCERISGS. N-linked (GlcNAc...) asparagine glycosylation occurs at Asn137. Residues 160–180 form a helical membrane-spanning segment; it reads LIGSFAAMVVLILLILLSAVA. Residues 181–184 lie on the Cytoplasmic side of the membrane; sequence LARR.

It belongs to the Casparian strip membrane proteins (CASP) family. In terms of assembly, homodimer and heterodimers.

It is found in the cell membrane. Functionally, regulates membrane-cell wall junctions and localized cell wall deposition. Required for establishment of the Casparian strip membrane domain (CSD) and the subsequent formation of Casparian strips, a cell wall modification of the root endodermis that determines an apoplastic barrier between the intraorganismal apoplasm and the extraorganismal apoplasm and prevents lateral diffusion. This chain is Casparian strip membrane protein 3, found in Brachypodium distachyon (Purple false brome).